Consider the following 195-residue polypeptide: 2-amino-4-hydroxy-6-hydroxymethyldihydropteridine pyrophosphokinase (195 aa).

The protein belongs to the HPPK family.

The enzyme catalyses 6-hydroxymethyl-7,8-dihydropterin + ATP = (7,8-dihydropterin-6-yl)methyl diphosphate + AMP + H(+). The protein operates within cofactor biosynthesis; tetrahydrofolate biosynthesis; 2-amino-4-hydroxy-6-hydroxymethyl-7,8-dihydropteridine diphosphate from 7,8-dihydroneopterin triphosphate: step 4/4. Functionally, catalyzes the transfer of pyrophosphate from adenosine triphosphate (ATP) to 6-hydroxymethyl-7,8-dihydropterin, an enzymatic step in folate biosynthesis pathway. This Synechocystis sp. (strain ATCC 27184 / PCC 6803 / Kazusa) protein is 2-amino-4-hydroxy-6-hydroxymethyldihydropteridine pyrophosphokinase (folK).